The chain runs to 818 residues: RNA-directed RNA polymerase (818 aa).

Positions 524 to 641 constitute a RdRp catalytic domain; it reads PVAIGLDASR…IVERRNLKQI (118 aa).

It belongs to the tombusviridae RNA polymerase family.

The catalysed reaction is RNA(n) + a ribonucleoside 5'-triphosphate = RNA(n+1) + diphosphate. In terms of biological role, RNA-dependent RNA polymerase that plays an essential role in the virus replication. The protein is RNA-directed RNA polymerase of Cucumis sativus (Cucumber).